A 30-amino-acid chain; its full sequence is Scolopendra 20528.11 Da toxin (30 aa).

This sequence belongs to the CRISP family. Venom allergen 5-like subfamily. Contains 3 disulfide bonds. In terms of tissue distribution, expressed by the venom gland.

It is found in the secreted. The sequence is that of Scolopendra 20528.11 Da toxin from Scolopendra angulata (Barbados giant red centipede).